The primary structure comprises 235 residues: Protein Thf1 (235 aa).

Positions 183–204 (DKLNKDLELYRSNLDKMAQALV) form a coiled coil. Positions 213-235 (DRKKREQRKQQSTAPVAPPSSNE) are disordered. A compositionally biased stretch (polar residues) spans 222 to 235 (QQSTAPVAPPSSNE).

The protein belongs to the THF1 family.

Its function is as follows. May be involved in photosynthetic membrane biogenesis. The polypeptide is Protein Thf1 (Nostoc punctiforme (strain ATCC 29133 / PCC 73102)).